Consider the following 166-residue polypeptide: Small ribosomal subunit protein uS5 (166 aa).

The S5 DRBM domain maps to 11–74; it reads FLEKLIAVNR…EKARRNMVDV (64 aa).

The protein belongs to the universal ribosomal protein uS5 family. Part of the 30S ribosomal subunit. Contacts proteins S4 and S8.

In terms of biological role, with S4 and S12 plays an important role in translational accuracy. Its function is as follows. Located at the back of the 30S subunit body where it stabilizes the conformation of the head with respect to the body. The polypeptide is Small ribosomal subunit protein uS5 (Alteromonas mediterranea (strain DSM 17117 / CIP 110805 / LMG 28347 / Deep ecotype)).